A 242-amino-acid polypeptide reads, in one-letter code: Neuromodulin (242 aa).

The segment at 1 to 242 (MLCCMRRTKQ…EEREADQEHA (242 aa)) is disordered. 2 S-palmitoyl cysteine lipidation sites follow: C3 and C4. Residues 9–32 (KQVEKNDEDQKIEQDGIKPEDKAH) are compositionally biased toward basic and acidic residues. Residues 31–60 (AHKAATKIQASFRGHITRKKLKGEKKGDAQ) form the IQ domain. At S41 the chain carries Phosphoserine; by PHK and PKC. Composition is skewed to basic and acidic residues over residues 66-84 (GNEK…KEGE) and 98-117 (KAEE…KGEG). Residues 142 to 157 (ETESATKASTDNSPSS) show a composition bias toward polar residues. S154, S156, and S157 each carry phosphoserine. The span at 158–170 (KAEDAPAKEEPKQ) shows a compositional bias: basic and acidic residues. Over residues 171-203 (ADVPAAVTAAAAATTPAAEDAAAKATAQPPTDA) the composition is skewed to low complexity. A Phosphothreonine modification is found at T185. S206 and S207 each carry phosphoserine; by CK2. The segment covering 209–242 (AEEKIEAVDETKPKESARQDEGKGEEREADQEHA) has biased composition (basic and acidic residues).

It belongs to the neuromodulin family. Identified in a complex containing FGFR4, NCAM1, CDH2, PLCG1, FRS2, SRC, SHC1, GAP43 and CTTN. Interacts (via IQ domain) with calmodulin. Binds calmodulin with a greater affinity in the absence of Ca(2+) than in its presence. Phosphorylated. Phosphorylation of this protein by a protein kinase C is specifically correlated with certain forms of synaptic plasticity. In terms of processing, palmitoylated by ZDHHC3. Palmitoylation is regulated by ARF6 and is essential for plasma membrane association and axonal and dendritic filopodia induction. Deacylated by LYPLA2.

It is found in the cell membrane. It localises to the cell projection. The protein resides in the growth cone membrane. Its subcellular location is the synapse. The protein localises to the filopodium membrane. It is found in the perikaryon. It localises to the dendrite. The protein resides in the axon. Its subcellular location is the cytoplasm. This protein is associated with nerve growth. It is a major component of the motile 'growth cones' that form the tips of elongating axons. Plays a role in axonal and dendritic filopodia induction. This chain is Neuromodulin (GAP43), found in Felis catus (Cat).